A 362-amino-acid chain; its full sequence is MIGQLEHLARRGLFLFDPEAAHGLSIKALKSGLVPSCAAPADPRLGQTVAGLVFSNPIGMAAGYDKNAEVPEALLKIGFGFTEIGTVTPRPQAGNDKPRLFRLVEDEAVINRLGFNNEGHGAALARLKACSREALIGVNIGANKDSADRIADYVTGIRTFYAVARYFTANISSPNTPGLRDLQARESLSALLSAVLAARDDEARKGGRQVPVFLKIAPDLTEEGMDDIAAEVLAHGLDGLIVSNTTLSREGLKDRRQANEAGGLSGKPLFEKSTAVLARMRKRVGPHLPIIGVGGVCSAETAAEKIRAGADLVQLYSCMIYEGPGLPGRIVRGLSALCEREKLASIRDIRDSRLDYWSGRNV.

Residues 62–66 and threonine 86 each bind FMN; that span reads AGYDK. Lysine 66 contributes to the substrate binding site. 111 to 115 is a binding site for substrate; it reads NRLGF. Residues asparagine 139 and asparagine 170 each coordinate FMN. Asparagine 170 serves as a coordination point for substrate. Serine 173 acts as the Nucleophile in catalysis. Asparagine 175 is a binding site for substrate. Residues lysine 215 and serine 243 each contribute to the FMN site. Position 244 to 245 (244 to 245) interacts with substrate; it reads NT. Residues glycine 266, glycine 295, and 316–317 each bind FMN; that span reads YS.

It belongs to the dihydroorotate dehydrogenase family. Type 2 subfamily. In terms of assembly, monomer. The cofactor is FMN.

It is found in the cell membrane. It catalyses the reaction (S)-dihydroorotate + a quinone = orotate + a quinol. It functions in the pathway pyrimidine metabolism; UMP biosynthesis via de novo pathway; orotate from (S)-dihydroorotate (quinone route): step 1/1. In terms of biological role, catalyzes the conversion of dihydroorotate to orotate with quinone as electron acceptor. The polypeptide is Dihydroorotate dehydrogenase (quinone) (Rhizobium meliloti (strain 1021) (Ensifer meliloti)).